The chain runs to 485 residues: NADH-quinone oxidoreductase subunit N (485 aa).

14 helical membrane-spanning segments follow: residues 8–28, 35–55, 75–95, 105–125, 127–147, 159–179, 203–223, 235–255, 271–291, 297–317, 326–346, 374–394, 408–430, and 455–475; these read LIALLPLLIVGLTVVVVMLSI, FLNATLSVLGLNAALVSLWFV, LYTGLVLLASLATCTFAYPWL, FYLLVLIAALGGILLAGANHL, ALFLGIELISLPLFGLVGYAF, YTILSAAASSFLLFGMALVYA, LLAGLGLMIVGLGFKLSLVPF, PAPVSTFLATASKIAIFGVVM, VVLGLIAFASIIFGNLMALSQ, LLGYSSISHLGYLLVALIALQ, VGVYLAGYLFSSLGAFGVVSL, AVMTVMMLSLAGIPMTLGFIG, WWLVAAVVVGSAIGLYYYLRVAV, and IVVLISALLVLVLGIWPQPLI.

Belongs to the complex I subunit 2 family. NDH-1 is composed of 13 different subunits. Subunits NuoA, H, J, K, L, M, N constitute the membrane sector of the complex.

It localises to the cell inner membrane. The catalysed reaction is a quinone + NADH + 5 H(+)(in) = a quinol + NAD(+) + 4 H(+)(out). Its function is as follows. NDH-1 shuttles electrons from NADH, via FMN and iron-sulfur (Fe-S) centers, to quinones in the respiratory chain. The immediate electron acceptor for the enzyme in this species is believed to be ubiquinone. Couples the redox reaction to proton translocation (for every two electrons transferred, four hydrogen ions are translocated across the cytoplasmic membrane), and thus conserves the redox energy in a proton gradient. In Klebsiella pneumoniae (strain 342), this protein is NADH-quinone oxidoreductase subunit N.